The following is a 405-amino-acid chain: GTPase Obg (405 aa).

Residues 1 to 159 (MRFIDEAVVT…KVLKFELKVV (159 aa)) form the Obg domain. An OBG-type G domain is found at 160-333 (ADVGLIGLPN…IKYHLMNEIE (174 aa)). Residues 166–173 (GLPNAGKS), 191–195 (FTTLV), 213–216 (DIPG), 283–286 (NKID), and 314–316 (ATL) contribute to the GTP site. The Mg(2+) site is built by Ser173 and Thr193. Over residues 371–382 (YRAARKAAREGT) the composition is skewed to basic and acidic residues. The interval 371–405 (YRAARKAAREGTDLSDDDFDGSDDDDDGVEVIYAP) is disordered. Residues 383–399 (DLSDDDFDGSDDDDDGV) are compositionally biased toward acidic residues.

This sequence belongs to the TRAFAC class OBG-HflX-like GTPase superfamily. OBG GTPase family. Monomer. Requires Mg(2+) as cofactor.

Its subcellular location is the cytoplasm. Functionally, an essential GTPase which binds GTP, GDP and possibly (p)ppGpp with moderate affinity, with high nucleotide exchange rates and a fairly low GTP hydrolysis rate. Plays a role in control of the cell cycle, stress response, ribosome biogenesis and in those bacteria that undergo differentiation, in morphogenesis control. This Psychrobacter arcticus (strain DSM 17307 / VKM B-2377 / 273-4) protein is GTPase Obg.